The primary structure comprises 274 residues: tRNA pseudouridine synthase A (274 aa).

The Nucleophile role is filled by D51. Residue Y109 participates in substrate binding.

Belongs to the tRNA pseudouridine synthase TruA family. As to quaternary structure, homodimer.

It catalyses the reaction uridine(38/39/40) in tRNA = pseudouridine(38/39/40) in tRNA. In terms of biological role, formation of pseudouridine at positions 38, 39 and 40 in the anticodon stem and loop of transfer RNAs. This is tRNA pseudouridine synthase A from Acidovorax ebreus (strain TPSY) (Diaphorobacter sp. (strain TPSY)).